The chain runs to 157 residues: Small ribosomal subunit protein uS7 (157 aa).

It belongs to the universal ribosomal protein uS7 family. In terms of assembly, part of the 30S ribosomal subunit. Contacts proteins S9 and S11.

Its function is as follows. One of the primary rRNA binding proteins, it binds directly to 16S rRNA where it nucleates assembly of the head domain of the 30S subunit. Is located at the subunit interface close to the decoding center, probably blocks exit of the E-site tRNA. In Chlamydia pneumoniae (Chlamydophila pneumoniae), this protein is Small ribosomal subunit protein uS7.